A 387-amino-acid chain; its full sequence is Formate-dependent phosphoribosylglycinamide formyltransferase (387 aa).

Residues 21–22 (EL) and glutamate 81 contribute to the N(1)-(5-phospho-beta-D-ribosyl)glycinamide site. ATP-binding positions include arginine 113, lysine 154, 159–164 (SSGHGQ), 193–196 (EEFV), and glutamate 201. Residues 118–306 (VFAAETLDLK…EFALHVRAVL (189 aa)) form the ATP-grasp domain. Mg(2+) contacts are provided by glutamate 265 and glutamate 277. Residues aspartate 284, lysine 352, and 359-360 (RR) contribute to the N(1)-(5-phospho-beta-D-ribosyl)glycinamide site.

This sequence belongs to the PurK/PurT family. As to quaternary structure, homodimer.

It catalyses the reaction N(1)-(5-phospho-beta-D-ribosyl)glycinamide + formate + ATP = N(2)-formyl-N(1)-(5-phospho-beta-D-ribosyl)glycinamide + ADP + phosphate + H(+). It participates in purine metabolism; IMP biosynthesis via de novo pathway; N(2)-formyl-N(1)-(5-phospho-D-ribosyl)glycinamide from N(1)-(5-phospho-D-ribosyl)glycinamide (formate route): step 1/1. Involved in the de novo purine biosynthesis. Catalyzes the transfer of formate to 5-phospho-ribosyl-glycinamide (GAR), producing 5-phospho-ribosyl-N-formylglycinamide (FGAR). Formate is provided by PurU via hydrolysis of 10-formyl-tetrahydrofolate. The protein is Formate-dependent phosphoribosylglycinamide formyltransferase of Sulfurovum sp. (strain NBC37-1).